We begin with the raw amino-acid sequence, 476 residues long: MTASTATETLLHKGSGLQVVVGLGQSGLSVAHYLAEQGYQVAVTDNQENPALADKLPATIDIRQFGAIDAELLQQAARIIISPGISLDNDAIAAARAANIPVVSDIQLFCEACTVPIVAITGSNAKSTVTTLVGQMAADAGINVGVGGNIGVPALSLLSNDKMELAVIELSSFQLETVTNLGAQVATVLNMSPDHLDRHGDMLGYHQAKHRIFQGAKSVVINREDALTRPLVSDSLPRLSTGIHAPNKGHYGLITDAAGQTYLARGTERLISADKLKIKGRHNLLNAQAALALGELAGLPLESMLSTLQQFAGLEHRCQYVATIAGIDYFNDSKGTNIGSTMAAVEGLGAVYAPKDGKLLLILGGQGKAQQFGELSPFINQYVSQVLFIGEDSQQIEQHLRAAGLSDEVSLHQCQTLENAFSMIEQVTASSLSQVQAVLLSPACASFDQFNGFVARGERFSQLVKQLNTVSQQALS.

An ATP-binding site is contributed by 122–128 (GSNAKST).

Belongs to the MurCDEF family.

It is found in the cytoplasm. It carries out the reaction UDP-N-acetyl-alpha-D-muramoyl-L-alanine + D-glutamate + ATP = UDP-N-acetyl-alpha-D-muramoyl-L-alanyl-D-glutamate + ADP + phosphate + H(+). The protein operates within cell wall biogenesis; peptidoglycan biosynthesis. Functionally, cell wall formation. Catalyzes the addition of glutamate to the nucleotide precursor UDP-N-acetylmuramoyl-L-alanine (UMA). The protein is UDP-N-acetylmuramoylalanine--D-glutamate ligase of Psychrobacter arcticus (strain DSM 17307 / VKM B-2377 / 273-4).